Here is a 274-residue protein sequence, read N- to C-terminus: Thiazole synthase (274 aa).

Residue Lys-115 is the Schiff-base intermediate with DXP of the active site. Residues Gly-176, 202 to 203 (AG), and 224 to 225 (NS) each bind 1-deoxy-D-xylulose 5-phosphate.

It belongs to the ThiG family. As to quaternary structure, homotetramer. Forms heterodimers with either ThiH or ThiS.

The protein localises to the cytoplasm. It catalyses the reaction [ThiS sulfur-carrier protein]-C-terminal-Gly-aminoethanethioate + 2-iminoacetate + 1-deoxy-D-xylulose 5-phosphate = [ThiS sulfur-carrier protein]-C-terminal Gly-Gly + 2-[(2R,5Z)-2-carboxy-4-methylthiazol-5(2H)-ylidene]ethyl phosphate + 2 H2O + H(+). It functions in the pathway cofactor biosynthesis; thiamine diphosphate biosynthesis. Catalyzes the rearrangement of 1-deoxy-D-xylulose 5-phosphate (DXP) to produce the thiazole phosphate moiety of thiamine. Sulfur is provided by the thiocarboxylate moiety of the carrier protein ThiS. In vitro, sulfur can be provided by H(2)S. This Psychrobacter arcticus (strain DSM 17307 / VKM B-2377 / 273-4) protein is Thiazole synthase.